Consider the following 300-residue polypeptide: Protein SPEAR2 (300 aa).

The span at 1–11 (MCSNNNTSSGS) shows a compositional bias: polar residues. Positions 1–64 (MCSNNNTSSG…PPLSSSPSLP (64 aa)) are disordered. Residues 25–38 (CRKKQKKDKVRRRG) are compositionally biased toward basic residues. The SPL signature appears at 37 to 45 (RGPGVAELE). A compositionally biased stretch (basic and acidic residues) spans 43–54 (ELEKIRLQEEYK). The span at 55-64 (PPLSSSPSLP) shows a compositional bias: low complexity. The EAR motif lies at 294-300 (IDLNLKL).

Homodimer and heterodimer with SPL and SPEARs. Interacts with SPL, SPEAR1, SPEAR3 and SPEAR4. As to expression, expressed in leaves.

Functionally, adapter-like transcriptional repressor recruiting TPL/TPR corepressors to inhibit TCP transcription factors. May be involved in leaf development. The sequence is that of Protein SPEAR2 from Arabidopsis thaliana (Mouse-ear cress).